The sequence spans 157 residues: SsrA-binding protein (157 aa).

Residues 135-157 are disordered; it reads KRDTIKDREGKREVERAMKTNHR.

Belongs to the SmpB family.

The protein localises to the cytoplasm. Required for rescue of stalled ribosomes mediated by trans-translation. Binds to transfer-messenger RNA (tmRNA), required for stable association of tmRNA with ribosomes. tmRNA and SmpB together mimic tRNA shape, replacing the anticodon stem-loop with SmpB. tmRNA is encoded by the ssrA gene; the 2 termini fold to resemble tRNA(Ala) and it encodes a 'tag peptide', a short internal open reading frame. During trans-translation Ala-aminoacylated tmRNA acts like a tRNA, entering the A-site of stalled ribosomes, displacing the stalled mRNA. The ribosome then switches to translate the ORF on the tmRNA; the nascent peptide is terminated with the 'tag peptide' encoded by the tmRNA and targeted for degradation. The ribosome is freed to recommence translation, which seems to be the essential function of trans-translation. This chain is SsrA-binding protein, found in Albidiferax ferrireducens (strain ATCC BAA-621 / DSM 15236 / T118) (Rhodoferax ferrireducens).